The following is a 450-amino-acid chain: Phosphoglucosamine mutase (450 aa).

Catalysis depends on serine 101, which acts as the Phosphoserine intermediate. The Mg(2+) site is built by serine 101, aspartate 240, aspartate 242, and aspartate 244. A Phosphoserine modification is found at serine 101.

This sequence belongs to the phosphohexose mutase family. Requires Mg(2+) as cofactor. Activated by phosphorylation.

It catalyses the reaction alpha-D-glucosamine 1-phosphate = D-glucosamine 6-phosphate. Its function is as follows. Catalyzes the conversion of glucosamine-6-phosphate to glucosamine-1-phosphate. This chain is Phosphoglucosamine mutase, found in Streptococcus equi subsp. zooepidemicus (strain MGCS10565).